The chain runs to 172 residues: Shikimate kinase (172 aa).

11–16 is a binding site for ATP; it reads GCGKST. Residue Ser15 participates in Mg(2+) binding. Positions 33, 57, and 80 each coordinate substrate. Arg120 serves as a coordination point for ATP. A substrate-binding site is contributed by Arg142. Arg158 contacts ATP.

The protein belongs to the shikimate kinase family. In terms of assembly, monomer. Requires Mg(2+) as cofactor.

The protein localises to the cytoplasm. The enzyme catalyses shikimate + ATP = 3-phosphoshikimate + ADP + H(+). The protein operates within metabolic intermediate biosynthesis; chorismate biosynthesis; chorismate from D-erythrose 4-phosphate and phosphoenolpyruvate: step 5/7. Catalyzes the specific phosphorylation of the 3-hydroxyl group of shikimic acid using ATP as a cosubstrate. This chain is Shikimate kinase, found in Flavobacterium johnsoniae (strain ATCC 17061 / DSM 2064 / JCM 8514 / BCRC 14874 / CCUG 350202 / NBRC 14942 / NCIMB 11054 / UW101) (Cytophaga johnsonae).